Reading from the N-terminus, the 1135-residue chain is APC membrane recruitment protein 1 (1135 aa).

Met1 is modified (N-acetylmethionine). Disordered regions lie at residues Met1–Gly115, Ala156–Pro308, Ser339–Asp405, Gly447–Gly484, Asn736–Asn764, Leu921–Leu948, and Val1007–Lys1135. Over residues Gln10–Ser19 the composition is skewed to low complexity. The span at Gln23–Glu35 shows a compositional bias: basic and acidic residues. Positions Ala36–Gly50 are enriched in low complexity. Positions Phe73–Lys83 are enriched in gly residues. Composition is skewed to basic and acidic residues over residues Lys94 to Glu107 and Gly196 to Val208. Positions Lys238–Pro248 are enriched in pro residues. Ser246 is subject to Phosphoserine. Composition is skewed to basic and acidic residues over residues Met253–Met262 and Glu282–Glu291. Over residues Ala373–Asp405 the composition is skewed to acidic residues. The segment covering Thr455–Asn466 has biased composition (polar residues). A compositionally biased stretch (acidic residues) spans Glu926 to Gly938. Low complexity predominate over residues Pro1058–Pro1069. The span at Ser1119 to Lys1135 shows a compositional bias: polar residues.

Belongs to the Amer family. In terms of assembly, interacts with CTNNB1, AXIN1, LRP6, KEAP1, APC and BTRC. Interacts with SCF (SKP1-CUL1-F-box protein) E3 ubiquitin-protein ligase complexes containing BTRC and/or FBXW11. Identified in the beta-catenin destruction complex containing CTNNB1, APC, AXIN1 and AXIN2. Interacts with WT1. Detected in fetal and adult kidney, brain and spleen.

The protein resides in the cytoplasm. It localises to the cell membrane. It is found in the nucleus. In terms of biological role, regulator of the canonical Wnt signaling pathway. Acts by specifically binding phosphatidylinositol 4,5-bisphosphate (PtdIns(4,5)P2), translocating to the cell membrane and interacting with key regulators of the canonical Wnt signaling pathway, such as components of the beta-catenin destruction complex. Acts both as a positive and negative regulator of the Wnt signaling pathway, depending on the context: acts as a positive regulator by promoting LRP6 phosphorylation. Also acts as a negative regulator by acting as a scaffold protein for the beta-catenin destruction complex and promoting stabilization of Axin at the cell membrane. Promotes CTNNB1 ubiquitination and degradation. Involved in kidney development. This chain is APC membrane recruitment protein 1 (AMER1), found in Homo sapiens (Human).